Here is an 840-residue protein sequence, read N- to C-terminus: MVRVMLVRFGFLLLMISFVFLSNNTLGQQQDDDDDSAVYIVTLKQPPIVHLFEEQELKHKKSKFTPKLRPRNNSRKRHGKSKIPSVVQSHDSFLRKTLKGEKYIKLYSYHYLINGFALFINSQQAEKLSMRKEVANIVLDYSVRTATTYTPQFMGLPQGAWVKEGGFEIAGEGVIIGFIDTGIDPNHPSFNDNDSKRSYPIPKHFSGVCEVTPDFPSGSCNKKLIGARHFAQSAVTRGIFNSSEDYASPFDGDGHGTHTASVAAGNHGVPVIVSNHNFGYASGIAPRAFISVYKALYKSFGGFAADVVAAIDQAAQDGVDILSLSITPNRKPPGVATFFNPIDMALLSAVKAGIFVVQAAGNTGPAPKTMSSFSPWIFTVGASSHDRVYSNSLTLGNNVTIPGMGFAIPTDSGKMYKMISAFHALNNSTSVDKDMYVGECQDYENFDQDRVSGKLLICSYSARFVLGLSTIKQALDVAKNLSATGVIFYIDPYVLGFEINPTPMDMPGIIIPSVEDSKTLLKYYNSSIQRDVTTKEIVSFGAVAAIEGGLNANFSNRAPKVMYYSARGPDPEDNSFNDADVLKPNLVAPGNSIWGAWSSASTDSTEFEGEKFAMMSGTSMAAPHVAGVAALIKQSYPQFTPSTISSALSTTALLNDNKGSPIMAQRTYSNPDQSLYTATPSDMGSGFVNATAALDPGLVFDTSFEDYISFLCGINGSDTVVFNYTGFRCPANNTPVSGFDLNLPSITVSTLSGTQTFQRSMRNIAGNETYNVGWSPPYGVSMKVSPTQFSIAMGENQVLSVTLTVTKNSSSSSFGRIGLFGNTGHIVNIPVTVIAKIASS.

Residues 1–27 form the signal peptide; the sequence is MVRVMLVRFGFLLLMISFVFLSNNTLG. Residues 28 to 146 constitute a propeptide, activation peptide; the sequence is QQQDDDDDSA…IVLDYSVRTA (119 aa). The Inhibitor I9 domain occupies 38–146; sequence VYIVTLKQPP…IVLDYSVRTA (109 aa). Positions 61-81 are enriched in basic residues; it reads KSKFTPKLRPRNNSRKRHGKS. Residues 61 to 85 form a disordered region; it reads KSKFTPKLRPRNNSRKRHGKSKIPS. Asn-72 carries N-linked (GlcNAc...) asparagine glycosylation. The Peptidase S8 domain maps to 148–694; that stretch reads TYTPQFMGLP…SGFVNATAAL (547 aa). Residue Asp-180 is the Charge relay system of the active site. Residues Asn-193 and Asn-241 are each glycosylated (N-linked (GlcNAc...) asparagine). His-255 (charge relay system) is an active-site residue. N-linked (GlcNAc...) asparagine glycosylation is found at Asn-398, Asn-427, Asn-480, Asn-525, and Asn-553. Positions 418-513 constitute a PA domain; that stretch reads MISAFHALNN…MDMPGIIIPS (96 aa). Ser-619 acts as the Charge relay system in catalysis. Asn-689, Asn-715, Asn-723, Asn-767, and Asn-808 each carry an N-linked (GlcNAc...) asparagine glycan.

The protein belongs to the peptidase S8 family.

It localises to the secreted. This Arabidopsis thaliana (Mouse-ear cress) protein is Subtilisin-like protease SBT2.3.